Here is a 363-residue protein sequence, read N- to C-terminus: Fructose-1,6-bisphosphate aldolase/phosphatase (363 aa).

The Proton acceptor; for FBP phosphatase activity role is filled by Asp-11. Residues Asp-11, His-18, Asp-51, and Asp-52 each contribute to the Mg(2+) site. Position 18 (His-18) interacts with beta-D-fructose 1,6-bisphosphate. His-18 contacts dihydroxyacetone phosphate. A beta-D-fructose 1,6-bisphosphate-binding site is contributed by Tyr-89. Position 93 (Gln-93) interacts with Mg(2+). 102–103 (GN) serves as a coordination point for beta-D-fructose 1,6-bisphosphate. A Mg(2+)-binding site is contributed by Asp-130. Lys-131 serves as a coordination point for beta-D-fructose 1,6-bisphosphate. Dihydroxyacetone phosphate is bound at residue Lys-131. Tyr-230 (proton donor/acceptor; for FBP aldolase activity) is an active-site residue. Residues Lys-233, Asp-234, and Asp-235 each contribute to the Mg(2+) site. Lys-233 acts as the Schiff-base intermediate with DHAP; for FBP aldolase activity in catalysis. Residues 243-244 (QK), Arg-267, and Tyr-348 each bind beta-D-fructose 1,6-bisphosphate. A dihydroxyacetone phosphate-binding site is contributed by Arg-267.

It belongs to the FBP aldolase/phosphatase family. Homooctamer; dimer of tetramers. It depends on Mg(2+) as a cofactor.

It catalyses the reaction beta-D-fructose 1,6-bisphosphate + H2O = beta-D-fructose 6-phosphate + phosphate. The enzyme catalyses beta-D-fructose 1,6-bisphosphate = D-glyceraldehyde 3-phosphate + dihydroxyacetone phosphate. The protein operates within carbohydrate biosynthesis; gluconeogenesis. Functionally, catalyzes two subsequent steps in gluconeogenesis: the aldol condensation of dihydroxyacetone phosphate (DHAP) and glyceraldehyde-3-phosphate (GA3P) to fructose-1,6-bisphosphate (FBP), and the dephosphorylation of FBP to fructose-6-phosphate (F6P). This Thermus thermophilus (strain ATCC BAA-163 / DSM 7039 / HB27) protein is Fructose-1,6-bisphosphate aldolase/phosphatase.